The primary structure comprises 155 residues: MPKGEGKVIAQNKKAHHDYFIEETYEAGLVLQGTEIKSIRNGRVNLKDSFAKVEKGEVFLHNMHISPYEQGNRYNHDPLRTRKLLLHRREINKLIGYTKEQGYTLVPLKLYIKNGFAKVELGVAKGKKKYDKREDMKRREAQREIERAFRERQKL.

It belongs to the SmpB family.

The protein resides in the cytoplasm. In terms of biological role, required for rescue of stalled ribosomes mediated by trans-translation. Binds to transfer-messenger RNA (tmRNA), required for stable association of tmRNA with ribosomes. tmRNA and SmpB together mimic tRNA shape, replacing the anticodon stem-loop with SmpB. tmRNA is encoded by the ssrA gene; the 2 termini fold to resemble tRNA(Ala) and it encodes a 'tag peptide', a short internal open reading frame. During trans-translation Ala-aminoacylated tmRNA acts like a tRNA, entering the A-site of stalled ribosomes, displacing the stalled mRNA. The ribosome then switches to translate the ORF on the tmRNA; the nascent peptide is terminated with the 'tag peptide' encoded by the tmRNA and targeted for degradation. The ribosome is freed to recommence translation, which seems to be the essential function of trans-translation. The chain is SsrA-binding protein from Geobacillus kaustophilus (strain HTA426).